A 333-amino-acid chain; its full sequence is D-fructose 1,6-bisphosphatase class 2/sedoheptulose 1,7-bisphosphatase (333 aa).

Residues Asp33, Glu57, Asp85, and Glu88 each coordinate Mn(2+). Residues 88 to 90 (EGT), Tyr119, 164 to 166 (RAR), and 186 to 188 (DGD) contribute to the substrate site. Mn(2+) is bound at residue Glu213.

It belongs to the FBPase class 2 family. In terms of assembly, homotetramer. It depends on Mn(2+) as a cofactor.

The enzyme catalyses beta-D-fructose 1,6-bisphosphate + H2O = beta-D-fructose 6-phosphate + phosphate. It catalyses the reaction D-sedoheptulose 1,7-bisphosphate + H2O = D-sedoheptulose 7-phosphate + phosphate. It functions in the pathway carbohydrate biosynthesis; Calvin cycle. Its function is as follows. Catalyzes the hydrolysis of fructose 1,6-bisphosphate (Fru 1,6-P2) and sedoheptulose 1,7-bisphosphate (Sed 1,7-P2) to fructose 6-phosphate and sedoheptulose 7-phosphate, respectively. In Prochlorococcus marinus subsp. pastoris (strain CCMP1986 / NIES-2087 / MED4), this protein is D-fructose 1,6-bisphosphatase class 2/sedoheptulose 1,7-bisphosphatase.